Reading from the N-terminus, the 157-residue chain is Crossover junction endodeoxyribonuclease RuvC (157 aa).

Catalysis depends on residues Asp-7, Glu-67, and Asp-140. Positions 7, 67, and 140 each coordinate Mg(2+).

The protein belongs to the RuvC family. Homodimer which binds Holliday junction (HJ) DNA. The HJ becomes 2-fold symmetrical on binding to RuvC with unstacked arms; it has a different conformation from HJ DNA in complex with RuvA. In the full resolvosome a probable DNA-RuvA(4)-RuvB(12)-RuvC(2) complex forms which resolves the HJ. Mg(2+) serves as cofactor.

The protein resides in the cytoplasm. It carries out the reaction Endonucleolytic cleavage at a junction such as a reciprocal single-stranded crossover between two homologous DNA duplexes (Holliday junction).. Functionally, the RuvA-RuvB-RuvC complex processes Holliday junction (HJ) DNA during genetic recombination and DNA repair. Endonuclease that resolves HJ intermediates. Cleaves cruciform DNA by making single-stranded nicks across the HJ at symmetrical positions within the homologous arms, yielding a 5'-phosphate and a 3'-hydroxyl group; requires a central core of homology in the junction. The consensus cleavage sequence is 5'-(A/T)TT(C/G)-3'. Cleavage occurs on the 3'-side of the TT dinucleotide at the point of strand exchange. HJ branch migration catalyzed by RuvA-RuvB allows RuvC to scan DNA until it finds its consensus sequence, where it cleaves and resolves the cruciform DNA. The polypeptide is Crossover junction endodeoxyribonuclease RuvC (Rickettsia bellii (strain RML369-C)).